Reading from the N-terminus, the 199-residue chain is 7-methyl-GTP pyrophosphatase (199 aa).

The active-site Proton acceptor is aspartate 74.

Belongs to the Maf family. YceF subfamily. Requires a divalent metal cation as cofactor.

The protein resides in the cytoplasm. The enzyme catalyses N(7)-methyl-GTP + H2O = N(7)-methyl-GMP + diphosphate + H(+). In terms of biological role, nucleoside triphosphate pyrophosphatase that hydrolyzes 7-methyl-GTP (m(7)GTP). May have a dual role in cell division arrest and in preventing the incorporation of modified nucleotides into cellular nucleic acids. In Cupriavidus pinatubonensis (strain JMP 134 / LMG 1197) (Cupriavidus necator (strain JMP 134)), this protein is 7-methyl-GTP pyrophosphatase.